A 163-amino-acid polypeptide reads, in one-letter code: 2,3-dimethylmalate dehydratase small subunit (163 aa).

Belongs to the LeuD family. LeuD type 2 subfamily. As to quaternary structure, heterodimer of a large and a small subunit.

The enzyme catalyses (2R,3S)-2,3-dimethylmalate = dimethylmaleate + H2O. It functions in the pathway cofactor degradation; nicotinate degradation; propanoate and pyruvate from 6-hydroxynicotinate: step 7/8. The polypeptide is 2,3-dimethylmalate dehydratase small subunit (Eubacterium barkeri (Clostridium barkeri)).